A 92-amino-acid chain; its full sequence is Small ribosomal subunit protein uS19 (92 aa).

It belongs to the universal ribosomal protein uS19 family.

Functionally, protein S19 forms a complex with S13 that binds strongly to the 16S ribosomal RNA. The chain is Small ribosomal subunit protein uS19 from Allorhizobium ampelinum (strain ATCC BAA-846 / DSM 112012 / S4) (Agrobacterium vitis (strain S4)).